Reading from the N-terminus, the 488-residue chain is V-type proton ATPase subunit B 1 (488 aa).

Belongs to the ATPase alpha/beta chains family. As to quaternary structure, V-ATPase is a heteromultimeric enzyme composed of a peripheral catalytic V1 complex (main components: subunits A, B, C, D, E, and F) attached to an integral membrane V0 proton pore complex (main component: the proteolipid protein).

Its function is as follows. Non-catalytic subunit of the peripheral V1 complex of vacuolar ATPase. V-ATPase is responsible for acidifying a variety of intracellular compartments in eukaryotic cells. The protein is V-type proton ATPase subunit B 1 of Gossypium hirsutum (Upland cotton).